The primary structure comprises 485 residues: Signal recognition particle protein (485 aa).

Residues 107–114, 189–193, and 247–250 each bind GTP; these read GLQGAGKT, DTAGR, and TKLD. The tract at residues 452–485 is disordered; that stretch reads GFGGGAPAPQPGFRGYGPPKKQKKGSKKKKGFGL. Residues 471-485 are compositionally biased toward basic residues; sequence KKQKKGSKKKKGFGL.

It belongs to the GTP-binding SRP family. SRP54 subfamily. In terms of assembly, part of the signal recognition particle protein translocation system, which is composed of SRP and FtsY.

Its subcellular location is the cytoplasm. It catalyses the reaction GTP + H2O = GDP + phosphate + H(+). Involved in targeting and insertion of nascent membrane proteins into the cytoplasmic membrane. Binds to the hydrophobic signal sequence of the ribosome-nascent chain (RNC) as it emerges from the ribosomes. The SRP-RNC complex is then targeted to the cytoplasmic membrane where it interacts with the SRP receptor FtsY. This chain is Signal recognition particle protein, found in Synechococcus elongatus (strain ATCC 33912 / PCC 7942 / FACHB-805) (Anacystis nidulans R2).